The sequence spans 126 residues: Glycine cleavage system H protein (126 aa).

Positions 24–106 (TITVGITDHA…YGEGWFFRMK (83 aa)) constitute a Lipoyl-binding domain. K65 is subject to N6-lipoyllysine.

The protein belongs to the GcvH family. The glycine cleavage system is composed of four proteins: P, T, L and H. Requires (R)-lipoate as cofactor.

In terms of biological role, the glycine cleavage system catalyzes the degradation of glycine. The H protein shuttles the methylamine group of glycine from the P protein to the T protein. The sequence is that of Glycine cleavage system H protein from Psychrobacter arcticus (strain DSM 17307 / VKM B-2377 / 273-4).